We begin with the raw amino-acid sequence, 85 residues long: Large ribosomal subunit protein bL27 (85 aa).

The interval 1 to 21 (MAHKKGQGSTQNNRDSAGRRL) is disordered.

The protein belongs to the bacterial ribosomal protein bL27 family.

This chain is Large ribosomal subunit protein bL27, found in Wolinella succinogenes (strain ATCC 29543 / DSM 1740 / CCUG 13145 / JCM 31913 / LMG 7466 / NCTC 11488 / FDC 602W) (Vibrio succinogenes).